The chain runs to 118 residues: Large ribosomal subunit protein bL17 (118 aa).

The protein belongs to the bacterial ribosomal protein bL17 family. In terms of assembly, part of the 50S ribosomal subunit. Contacts protein L32.

This is Large ribosomal subunit protein bL17 from Hydrogenobaculum sp. (strain Y04AAS1).